The following is a 148-amino-acid chain: D-aminoacyl-tRNA deacylase (148 aa).

Positions 137–138 (GP) match the Gly-cisPro motif, important for rejection of L-amino acids motif.

This sequence belongs to the DTD family. In terms of assembly, homodimer.

It is found in the cytoplasm. It carries out the reaction glycyl-tRNA(Ala) + H2O = tRNA(Ala) + glycine + H(+). The enzyme catalyses a D-aminoacyl-tRNA + H2O = a tRNA + a D-alpha-amino acid + H(+). Functionally, an aminoacyl-tRNA editing enzyme that deacylates mischarged D-aminoacyl-tRNAs. Also deacylates mischarged glycyl-tRNA(Ala), protecting cells against glycine mischarging by AlaRS. Acts via tRNA-based rather than protein-based catalysis; rejects L-amino acids rather than detecting D-amino acids in the active site. By recycling D-aminoacyl-tRNA to D-amino acids and free tRNA molecules, this enzyme counteracts the toxicity associated with the formation of D-aminoacyl-tRNA entities in vivo and helps enforce protein L-homochirality. The polypeptide is D-aminoacyl-tRNA deacylase (Enterococcus faecalis (strain ATCC 700802 / V583)).